The sequence spans 142 residues: Large ribosomal subunit protein uL13 (142 aa).

It belongs to the universal ribosomal protein uL13 family. In terms of assembly, part of the 50S ribosomal subunit.

Functionally, this protein is one of the early assembly proteins of the 50S ribosomal subunit, although it is not seen to bind rRNA by itself. It is important during the early stages of 50S assembly. The polypeptide is Large ribosomal subunit protein uL13 (Salmonella agona (strain SL483)).